The following is a 293-amino-acid chain: Small ribosomal subunit protein uS2 (293 aa).

The segment at 239-293 (PAGGADWEAAPAGFPAAATGEWSEAQPATWESGAAAATGPSTEWADSAPKDTAGW) is disordered. Over residues 247 to 256 (AAPAGFPAAA) the composition is skewed to low complexity.

The protein belongs to the universal ribosomal protein uS2 family. As to quaternary structure, component of the small ribosomal subunit. Mature ribosomes consist of a small (40S) and a large (60S) subunit. The 40S subunit contains about 33 different proteins and 1 molecule of RNA (18S). The 60S subunit contains about 49 different proteins and 3 molecules of RNA (25S, 5.8S and 5S). Interacts with RPS21.

Its subcellular location is the cytoplasm. Its function is as follows. Required for the assembly and/or stability of the 40S ribosomal subunit. Required for the processing of the 20S rRNA-precursor to mature 18S rRNA in a late step of the maturation of 40S ribosomal subunits. The sequence is that of Small ribosomal subunit protein uS2 from Chaetomium globosum (strain ATCC 6205 / CBS 148.51 / DSM 1962 / NBRC 6347 / NRRL 1970) (Soil fungus).